A 425-amino-acid chain; its full sequence is Tyrosine--tRNA ligase (425 aa).

Y37 contacts L-tyrosine. The short motif at 42 to 51 (PTADSLHLGH) is the 'HIGH' region element. Positions 174 and 178 each coordinate L-tyrosine. Residues 234–238 (KFGKS) carry the 'KMSKS' region motif. K237 lines the ATP pocket. The S4 RNA-binding domain occupies 357-422 (DGLIDALAAS…RGKKLYALLV (66 aa)).

The protein belongs to the class-I aminoacyl-tRNA synthetase family. TyrS type 1 subfamily. In terms of assembly, homodimer.

The protein resides in the cytoplasm. It carries out the reaction tRNA(Tyr) + L-tyrosine + ATP = L-tyrosyl-tRNA(Tyr) + AMP + diphosphate + H(+). Catalyzes the attachment of tyrosine to tRNA(Tyr) in a two-step reaction: tyrosine is first activated by ATP to form Tyr-AMP and then transferred to the acceptor end of tRNA(Tyr). This is Tyrosine--tRNA ligase from Laribacter hongkongensis (strain HLHK9).